The following is a 235-amino-acid chain: uncharacterized protein (235 aa).

This sequence belongs to the UreF family.

It localises to the cytoplasm. It is found in the nucleus. Probably facilitates nickel incorporation. This is an uncharacterized protein from Schizosaccharomyces pombe (strain 972 / ATCC 24843) (Fission yeast).